The sequence spans 315 residues: Homoserine kinase (315 aa).

97 to 107 (PPARGLGSSAT) contacts ATP.

The protein belongs to the GHMP kinase family. Homoserine kinase subfamily.

It localises to the cytoplasm. It catalyses the reaction L-homoserine + ATP = O-phospho-L-homoserine + ADP + H(+). It participates in amino-acid biosynthesis; L-threonine biosynthesis; L-threonine from L-aspartate: step 4/5. Its function is as follows. Catalyzes the ATP-dependent phosphorylation of L-homoserine to L-homoserine phosphate. This chain is Homoserine kinase, found in Prochlorococcus marinus (strain MIT 9312).